Reading from the N-terminus, the 393-residue chain is Dual-specificity RNA methyltransferase RlmN (393 aa).

Positions 1 to 22 are disordered; the sequence is MSEQLLSELSPVAATSPSPAPA. Over residues 10–22 the composition is skewed to low complexity; the sequence is SPVAATSPSPAPA. The Proton acceptor role is filled by E114. In terms of domain architecture, Radical SAM core spans 120-358; sequence EDDRATLCVS…TTIVRKTRGD (239 aa). C127 and C364 are oxidised to a cystine. [4Fe-4S] cluster is bound by residues C134, C138, and C141. Residues 188–189, S220, 242–244, and N321 contribute to the S-adenosyl-L-methionine site; these read GE and SLH. C364 functions as the S-methylcysteine intermediate in the catalytic mechanism.

Belongs to the radical SAM superfamily. RlmN family. Requires [4Fe-4S] cluster as cofactor.

Its subcellular location is the cytoplasm. It carries out the reaction adenosine(2503) in 23S rRNA + 2 reduced [2Fe-2S]-[ferredoxin] + 2 S-adenosyl-L-methionine = 2-methyladenosine(2503) in 23S rRNA + 5'-deoxyadenosine + L-methionine + 2 oxidized [2Fe-2S]-[ferredoxin] + S-adenosyl-L-homocysteine. The catalysed reaction is adenosine(37) in tRNA + 2 reduced [2Fe-2S]-[ferredoxin] + 2 S-adenosyl-L-methionine = 2-methyladenosine(37) in tRNA + 5'-deoxyadenosine + L-methionine + 2 oxidized [2Fe-2S]-[ferredoxin] + S-adenosyl-L-homocysteine. Specifically methylates position 2 of adenine 2503 in 23S rRNA and position 2 of adenine 37 in tRNAs. m2A2503 modification seems to play a crucial role in the proofreading step occurring at the peptidyl transferase center and thus would serve to optimize ribosomal fidelity. The sequence is that of Dual-specificity RNA methyltransferase RlmN from Sodalis glossinidius (strain morsitans).